The sequence spans 141 residues: Large ribosomal subunit protein uL11 (141 aa).

The protein belongs to the universal ribosomal protein uL11 family. In terms of assembly, part of the ribosomal stalk of the 50S ribosomal subunit. Interacts with L10 and the large rRNA to form the base of the stalk. L10 forms an elongated spine to which L12 dimers bind in a sequential fashion forming a multimeric L10(L12)X complex. In terms of processing, one or more lysine residues are methylated.

Forms part of the ribosomal stalk which helps the ribosome interact with GTP-bound translation factors. The sequence is that of Large ribosomal subunit protein uL11 from Prosthecochloris aestuarii (strain DSM 271 / SK 413).